Here is a 346-residue protein sequence, read N- to C-terminus: MEKTLGLEIIEVVEQAAIASARLMGKGLRNEADGVAVKAMRDRMNQIYMRGRIVIGEGERDDAPMLYIGEQVGICTQPNAAQMCSIDELLEIDIAVDPCEGTNLVAEGRQGSMAVLAISEKGGLLGAPDLYMKKLAAPPQAKGKVHIDYPATKNLQIIAECLDRAIEDLVVIVMKRDRHKDLISEIRSTGARVRFIDDGDISAALSAGINGTGVHALMGIGAAPEGVISAAALRCLGSHFQGQLIYDPDVVQTGLLKGTKAEIEEQLKAQGVEQPDKVWEAEELASGKNVLFAACGITDGDFIKGVRFFTGSARTETMVISSQSNTVRFVDTVHILDPAHHASLVI.

Residues aspartate 33, glutamate 57, aspartate 97, and glutamate 100 each contribute to the Mn(2+) site. Substrate-binding positions include 100 to 102 (EGT), tyrosine 131, 176 to 178 (RDR), and 198 to 200 (DGD). Glutamate 225 contacts Mn(2+).

The protein belongs to the FBPase class 2 family. In terms of assembly, homotetramer. The cofactor is Mn(2+).

It catalyses the reaction beta-D-fructose 1,6-bisphosphate + H2O = beta-D-fructose 6-phosphate + phosphate. The catalysed reaction is D-sedoheptulose 1,7-bisphosphate + H2O = D-sedoheptulose 7-phosphate + phosphate. The protein operates within carbohydrate biosynthesis; Calvin cycle. In terms of biological role, catalyzes the hydrolysis of fructose 1,6-bisphosphate (Fru 1,6-P2) and sedoheptulose 1,7-bisphosphate (Sed 1,7-P2) to fructose 6-phosphate and sedoheptulose 7-phosphate, respectively. This chain is D-fructose 1,6-bisphosphatase class 2/sedoheptulose 1,7-bisphosphatase, found in Gloeobacter violaceus (strain ATCC 29082 / PCC 7421).